The following is a 368-amino-acid chain: PPE family immunomodulator PPE68 (368 aa).

2 disordered regions span residues 255–280 (LGTS…LLRA) and 312–368 (AAAG…EDDW). Residues 312 to 327 (AAAGSSATGGAAPVGA) are compositionally biased toward low complexity. Over residues 354–368 (REEDDEDDWDEEDDW) the composition is skewed to acidic residues.

Belongs to the mycobacterial PPE family. In terms of assembly, homodimer. Interacts with PE35. PE35/PPE68 complex interacts with human TLR2.

It localises to the secreted. Its subcellular location is the cell wall. The protein resides in the cell membrane. The protein localises to the cell surface. In terms of biological role, plays a major role in RD1-associated pathogenesis, and may contribute to the establishment and maintenance of M.tuberculosis infection. Together with PE35, stimulates the secretion of IL-10 and MCP-1 from human macrophages, via the interaction with human Toll-like receptor 2 (TLR2). The protein is PPE family immunomodulator PPE68 (PPE68) of Mycobacterium tuberculosis (strain CDC 1551 / Oshkosh).